The primary structure comprises 811 residues: Methionine--tRNA ligase (811 aa).

The short motif at 11 to 21 (PYVNNVPHLGN) is the 'HIGH' region element. 4 residues coordinate Zn(2+): cysteine 142, cysteine 145, cysteine 155, and cysteine 158. The short motif at 344–348 (KFSKS) is the 'KMSKS' region element. Lysine 347 lines the ATP pocket. The interval 606–640 (GVSVPRTAQMPTGMNKKETDAQQKKEEREMPPPSD) is disordered. Residues 620 to 635 (NKKETDAQQKKEEREM) show a composition bias toward basic and acidic residues. The region spanning 648–753 (FSERVVLKVA…PWALPGERAT (106 aa)) is the tRNA-binding domain.

This sequence belongs to the class-I aminoacyl-tRNA synthetase family. MetG type 1 subfamily. As to quaternary structure, homodimer. The cofactor is Zn(2+).

The protein localises to the cytoplasm. The enzyme catalyses tRNA(Met) + L-methionine + ATP = L-methionyl-tRNA(Met) + AMP + diphosphate. Its function is as follows. Is required not only for elongation of protein synthesis but also for the initiation of all mRNA translation through initiator tRNA(fMet) aminoacylation. In Treponema pallidum (strain Nichols), this protein is Methionine--tRNA ligase.